Consider the following 336-residue polypeptide: Galectin-12 (336 aa).

2 consecutive Galectin domains span residues 49–183 and 212–336; these read YVTT…VGFL and CSHA…CVHS.

In terms of tissue distribution, not widely expressed. Predominantly expressed in adipose tissue.

Its subcellular location is the nucleus. In terms of biological role, binds lactose. May participate in the apoptosis of adipocytes. This chain is Galectin-12 (LGALS12), found in Homo sapiens (Human).